The chain runs to 103 residues: Large ribosomal subunit protein bL21 (103 aa).

This sequence belongs to the bacterial ribosomal protein bL21 family. Part of the 50S ribosomal subunit. Contacts protein L20.

Functionally, this protein binds to 23S rRNA in the presence of protein L20. The protein is Large ribosomal subunit protein bL21 of Klebsiella pneumoniae (strain 342).